A 325-amino-acid chain; its full sequence is Glycerol-3-phosphate dehydrogenase [NAD(P)+] (325 aa).

Positions 15, 35, and 107 each coordinate NADPH. 3 residues coordinate sn-glycerol 3-phosphate: lysine 107, glycine 135, and serine 137. Alanine 139 contributes to the NADPH binding site. Positions 190, 243, 253, 254, and 255 each coordinate sn-glycerol 3-phosphate. The Proton acceptor role is filled by lysine 190. Residue arginine 254 participates in NADPH binding. The NADPH site is built by leucine 272 and glutamate 274.

The protein belongs to the NAD-dependent glycerol-3-phosphate dehydrogenase family.

Its subcellular location is the cytoplasm. It catalyses the reaction sn-glycerol 3-phosphate + NAD(+) = dihydroxyacetone phosphate + NADH + H(+). The catalysed reaction is sn-glycerol 3-phosphate + NADP(+) = dihydroxyacetone phosphate + NADPH + H(+). It functions in the pathway membrane lipid metabolism; glycerophospholipid metabolism. Its function is as follows. Catalyzes the reduction of the glycolytic intermediate dihydroxyacetone phosphate (DHAP) to sn-glycerol 3-phosphate (G3P), the key precursor for phospholipid synthesis. This Afipia carboxidovorans (strain ATCC 49405 / DSM 1227 / KCTC 32145 / OM5) (Oligotropha carboxidovorans) protein is Glycerol-3-phosphate dehydrogenase [NAD(P)+].